We begin with the raw amino-acid sequence, 743 residues long: UV-stimulated scaffold protein A (743 aa).

A VHS-like region spans residues 2-145 (DQKLSELVEV…HFLKQNKKID (144 aa)). A coiled-coil region spans residues 147 to 199 (QDVRSRTQAERKREEEKQRRLENIYKEKVKKATAEMEDMLEEIQSSLTEMENC). The segment at 221-310 (SDMRTKPTSQ…DDSDGDYEGS (90 aa)) is disordered. Over residues 226-252 (KPTSQSPSHSKSTSQSSAYSKSTSQVS) the composition is skewed to low complexity. The segment covering 283 to 300 (SLGEGAKESDKSARKSDT) has biased composition (basic and acidic residues). Positions 380–411 (ESLKCAIDVKKEIEAALKKYKEMNIDCHTKER) form a coiled coil. 2 disordered regions span residues 413 to 482 (VMTA…NDEL) and 500 to 525 (KALP…DLSQ). Over residues 417–428 (SDDDDDDDEFEE) the composition is skewed to acidic residues. 2 stretches are compositionally biased toward basic and acidic residues: residues 429–447 (VPEK…REEY) and 510–522 (GEPK…RETD). Lys-432 participates in a covalent cross-link: Glycyl lysine isopeptide (Lys-Gly) (interchain with G-Cter in ubiquitin). The segment at 591-618 (KHKCLAPMPNGSLCERQDRYKCPFHGKI) adopts a UVSSA-type zinc-finger fold. Zn(2+)-binding residues include Cys-594, Cys-604, Cys-612, and His-615.

It belongs to the UVSSA family. In terms of processing, monoubiquitinated at Lys-432 in response to transcription stress; this promotes efficient transfer of TFIIH to stalled RNA polymerase II.

It is found in the chromosome. Functionally, factor involved in transcription-coupled nucleotide excision repair (TC-NER), a mechanism that rapidly removes RNA polymerase II-blocking lesions from the transcribed strand of active genes. Acts as a key adapter that promotes recruitment of factors involved in TC-NER. Facilitates the ubiquitination of the elongating form of RNA polymerase II (RNA pol IIo) at DNA damage sites, thereby promoting RNA pol IIo backtracking and access by the TC-NER machinery to lesion sites. Also promotes stabilization of ERCC6/CSB by recruiting deubiquitinating enzyme USP7 to TC-NER complexes, preventing UV-induced degradation of ERCC6 by the proteasome. Mediates the recruitment of the TFIIH complex and other factors that are required for nucleotide excision repair to RNA polymerase II. Also required to inactivate stalled RNA polymerase II by blocking the access of TCEA1/TFIIS, thereby preventing reactivation of RNA polymerase II. The chain is UV-stimulated scaffold protein A (uvssa) from Xenopus tropicalis (Western clawed frog).